Reading from the N-terminus, the 255-residue chain is 1-(5-phosphoribosyl)-5-[(5-phosphoribosylamino)methylideneamino] imidazole-4-carboxamide isomerase (255 aa).

D8 (proton acceptor) is an active-site residue. D129 (proton donor) is an active-site residue.

The protein belongs to the HisA/HisF family.

It is found in the cytoplasm. The enzyme catalyses 1-(5-phospho-beta-D-ribosyl)-5-[(5-phospho-beta-D-ribosylamino)methylideneamino]imidazole-4-carboxamide = 5-[(5-phospho-1-deoxy-D-ribulos-1-ylimino)methylamino]-1-(5-phospho-beta-D-ribosyl)imidazole-4-carboxamide. Its pathway is amino-acid biosynthesis; L-histidine biosynthesis; L-histidine from 5-phospho-alpha-D-ribose 1-diphosphate: step 4/9. This is 1-(5-phosphoribosyl)-5-[(5-phosphoribosylamino)methylideneamino] imidazole-4-carboxamide isomerase from Prochlorococcus marinus (strain AS9601).